We begin with the raw amino-acid sequence, 637 residues long: MSWKLTKKLKDTHLAPLTNTFTRSSSTSTIKNESGEETPVVSQTPSISSTNSNGINASESLVSPPVDPVKPGILIVTLHEGRGFALSPHFQQVFTSHFQNNNYSSSVRPSSSSSHSTHGQTASFAQSGRPQSTSGGINAAPTIHGRYSTKYLPYALLDFEKNQVFVDAVSGTPENPLWAGDNTAFKFDVSRKTELNVQLYLRNPSARPGAGRSEDIFLGAVRVLPRFEEAQPYVDDPKLSKKDNQKAAAAHANNERHLGQLGAEWLDLQFGTGSIKIGVSFVENKQRSLKLEDFDLLKVVGKGSFGKVMQVMKKDTGRIYALKTIRKAHIISRSEVTHTLAERSVLAQINNPFIVPLKFSFQSPEKLYLVLAFVNGGELFHHLQREQRFDINRARFYTAELLCALECLHGFKVIYRDLKPENILLDYTGHIALCDFGLCKLDMKDEDRTNTFCGTPEYLAPELLLGNGYTKTVDWWTLGVLLYEMLTGLPPFYDENTNDMYRKILQEPLTFPSSDIVPPAARDLLTRLLDRDPQRRLGANGAAEIKSHHFFANIDWRKLLQRKYEPSFRPNVMGASDTTNFDTEFTSEAPQDSYVDGPVLSQTMQQQFAGWSYNRPVAGLGDAGGSVKDPSFGSIPE.

Low complexity predominate over residues 20–29 (TFTRSSSTST). Disordered stretches follow at residues 20–63 (TFTR…SLVS) and 104–140 (SSSV…INAA). Positions 40–61 (VVSQTPSISSTNSNGINASESL) are enriched in polar residues. A compositionally biased stretch (low complexity) spans 104–116 (SSSVRPSSSSSHS). The segment covering 117-136 (THGQTASFAQSGRPQSTSGG) has biased composition (polar residues). Residues 294–551 (FDLLKVVGKG…AAEIKSHHFF (258 aa)) enclose the Protein kinase domain. Residues 300–308 (VGKGSFGKV) and lysine 323 each bind ATP. The active-site Proton acceptor is the aspartate 417. One can recognise an AGC-kinase C-terminal domain in the interval 552 to 623 (ANIDWRKLLQ…NRPVAGLGDA (72 aa)). A phosphoserine mark is found at serine 593 and serine 612. A Phosphotyrosine modification is found at tyrosine 613.

Belongs to the protein kinase superfamily. Ser/Thr protein kinase family. As to quaternary structure, interacts with the sakA MAP kinase.

It catalyses the reaction L-seryl-[protein] + ATP = O-phospho-L-seryl-[protein] + ADP + H(+). The catalysed reaction is L-threonyl-[protein] + ATP = O-phospho-L-threonyl-[protein] + ADP + H(+). Its function is as follows. Serine/threonine protein kinase required for vegetative growth and conidiation. Important for fungal survival through the regulation of glycosphingolipid (GSL) biosynthesis and cross talks with MAP kinase pathways such as the cell wall integrity (CWI) and the high osmolarity glycerol (HOG) pathways. The protein is Serine/threonine protein kinase ypkA of Aspergillus fumigatus (strain ATCC MYA-4609 / CBS 101355 / FGSC A1100 / Af293) (Neosartorya fumigata).